Consider the following 533-residue polypeptide: Probable fucosyltransferase 5 (533 aa).

Residues 1-13 (MYQKFQISGKIVK) are Cytoplasmic-facing. The chain crosses the membrane as a helical; Signal-anchor for type II membrane protein span at residues 14–34 (TLGLKMKVLIAVSFGSLLFIL). Over 35–533 (SYSNNFNNKL…YGGLKLYDEF (499 aa)) the chain is Lumenal. N-linked (GlcNAc...) asparagine glycans are attached at residues N202, N227, N374, N396, and N475.

It belongs to the glycosyltransferase 37 family. As to expression, expressed in roots, leaves, flowers and siliques.

The protein resides in the golgi apparatus. It localises to the golgi stack membrane. It functions in the pathway protein modification; protein glycosylation. In terms of biological role, may be involved in cell wall biosynthesis. May act as a fucosyltransferase. The sequence is that of Probable fucosyltransferase 5 (FUT5) from Arabidopsis thaliana (Mouse-ear cress).